The sequence spans 328 residues: MRPILMKGHERPLTFLRYNREGDLLFSCAKDHTPTLWFADNGERLGTYRGHNGAVWCCDVSRDSSRLITGSADQTAKLWDVKSGKELFTFKFNAPTRSVDFAVGDRLAVITTDHFVDRTAAIHVKRIAEDPEEQDAESVLVLHCPDGKKRINRAVWGPLNQTIVSGGEDKVIRIWDAETGKLLKQSDEEVGHKKDITSLCKAADDSHFLTGSLDKTAKLWDMRTLTLLKTYTTVVPVNAVSLSPLLNHVVLGGGQDASAVTTTDHRAGKFEAKFYDKILQEEIGGVKGHFGPINALAFNPDGKSFSSGGEDGYVRLHHFDSDYFNIKI.

WD repeat units lie at residues 8-49 (GHER…GTYR), 50-89 (GHNGAVWCCDVSRDSSRLITGSADQTAKLWDVKSGKELFT), 146-185 (DGKKRINRAVWGPLNQTIVSGGEDKVIRIWDAETGKLLKQ), 191-230 (GHKKDITSLCKAADDSHFLTGSLDKTAKLWDMRTLTLLKT), and 288-327 (GHFGPINALAFNPDGKSFSSGGEDGYVRLHHFDSDYFNIK).

The protein belongs to the eIF-3 subunit I family. In terms of assembly, component of the eukaryotic translation initiation factor 3 (eIF-3) complex.

The protein resides in the cytoplasm. Its function is as follows. Component of the eukaryotic translation initiation factor 3 (eIF-3) complex, which is involved in protein synthesis of a specialized repertoire of mRNAs and, together with other initiation factors, stimulates binding of mRNA and methionyl-tRNAi to the 40S ribosome. The eIF-3 complex specifically targets and initiates translation of a subset of mRNAs involved in cell proliferation. The sequence is that of Eukaryotic translation initiation factor 3 subunit I (TIF3I1) from Arabidopsis thaliana (Mouse-ear cress).